The sequence spans 360 residues: MLLLLAEYLQQFHTGFAVVQYLTLRGILGVLTALILALCLGPWMIRTLQIRQIGQAVRDDGPQSHLSKKGTPTMGGALILSAIAISTLLWADLSNRYVWTVLAVTLLFGAIGWVDDYRKVIEKNSRGLPSRWKYFWQSVFGLGAALFLYMTAQTPAETTLILPLIKTIEIPLGAAFIVLTYFVIVGSSNAVNLTDGLDGLAIMPTVMVGGALGIFCYLSGNVKFAEYLLIPSVAGAGELIVFCGALIGAGLGFLWFNTYPAQVFMGDVGALALGAALGTIAVIVRQEVVLFIMGGVFVMETLSVMIQVASFKLTGKRVFRMAPIHHHFELKGWPEPRVIVRFWIITVVLVLIGLATLKLR.

A run of 10 helical transmembrane segments spans residues 25 to 45 (RGIL…PWMI), 73 to 93 (TMGG…WADL), 97 to 117 (YVWT…VDDY), 132 to 152 (WKYF…YMTA), 167 to 187 (TIEI…IVGS), 199 to 219 (GLAI…CYLS), 236 to 256 (AGEL…FLWF), 263 to 283 (VFMG…IAVI), 288 to 308 (VVLF…MIQV), and 338 to 358 (VIVR…ATLK).

The protein belongs to the glycosyltransferase 4 family. MraY subfamily. Mg(2+) serves as cofactor.

It is found in the cell inner membrane. It catalyses the reaction UDP-N-acetyl-alpha-D-muramoyl-L-alanyl-gamma-D-glutamyl-meso-2,6-diaminopimeloyl-D-alanyl-D-alanine + di-trans,octa-cis-undecaprenyl phosphate = di-trans,octa-cis-undecaprenyl diphospho-N-acetyl-alpha-D-muramoyl-L-alanyl-D-glutamyl-meso-2,6-diaminopimeloyl-D-alanyl-D-alanine + UMP. The protein operates within cell wall biogenesis; peptidoglycan biosynthesis. In terms of biological role, catalyzes the initial step of the lipid cycle reactions in the biosynthesis of the cell wall peptidoglycan: transfers peptidoglycan precursor phospho-MurNAc-pentapeptide from UDP-MurNAc-pentapeptide onto the lipid carrier undecaprenyl phosphate, yielding undecaprenyl-pyrophosphoryl-MurNAc-pentapeptide, known as lipid I. The sequence is that of Phospho-N-acetylmuramoyl-pentapeptide-transferase from Azotobacter vinelandii (strain DJ / ATCC BAA-1303).